The primary structure comprises 368 residues: Probable leucine aminopeptidase ARB_03492 (368 aa).

The first 18 residues, 1 to 18, serve as a signal peptide directing secretion; that stretch reads MKVSAIAAVAALAAVAVA. Asparagine 92 carries an N-linked (GlcNAc...) asparagine glycan. The Zn(2+) site is built by histidine 172 and aspartate 191. N-linked (GlcNAc...) asparagine glycosylation is found at asparagine 192 and asparagine 216. Positions 230 and 257 each coordinate Zn(2+). A disulfide bridge links cysteine 301 with cysteine 305. Histidine 334 contacts Zn(2+).

It belongs to the peptidase M28 family. M28E subfamily. In terms of assembly, monomer. Zn(2+) is required as a cofactor.

It localises to the secreted. In terms of biological role, probable extracellular aminopeptidase which contributes to pathogenicity. The chain is Probable leucine aminopeptidase ARB_03492 from Arthroderma benhamiae (strain ATCC MYA-4681 / CBS 112371) (Trichophyton mentagrophytes).